An 887-amino-acid chain; its full sequence is Alanine--tRNA ligase (887 aa).

His-564, His-568, Cys-676, and His-680 together coordinate Zn(2+). The disordered stretch occupies residues 854–873 (GQGGGGRPDMAQSGGPKGNK).

The protein belongs to the class-II aminoacyl-tRNA synthetase family. Zn(2+) serves as cofactor.

It is found in the cytoplasm. The catalysed reaction is tRNA(Ala) + L-alanine + ATP = L-alanyl-tRNA(Ala) + AMP + diphosphate. Functionally, catalyzes the attachment of alanine to tRNA(Ala) in a two-step reaction: alanine is first activated by ATP to form Ala-AMP and then transferred to the acceptor end of tRNA(Ala). Also edits incorrectly charged Ser-tRNA(Ala) and Gly-tRNA(Ala) via its editing domain. In Bartonella henselae (strain ATCC 49882 / DSM 28221 / CCUG 30454 / Houston 1) (Rochalimaea henselae), this protein is Alanine--tRNA ligase.